A 59-amino-acid chain; its full sequence is UPF0434 protein PMI0721 (59 aa).

Belongs to the UPF0434 family.

The protein is UPF0434 protein PMI0721 of Proteus mirabilis (strain HI4320).